The sequence spans 289 residues: N-acetylmuramoyl-L-alanine amidase AmiA (289 aa).

The segment at residues 1–34 (MSTFKLLKTLTSRRQVLKTGLAALTLSGMSHAVA) is a signal peptide (tat-type signal). A disordered region spans residues 36–61 (EETLKTSNGHSKPKTKKTGSKRLVML). A compositionally biased stretch (basic residues) spans 46 to 55 (SKPKTKKTGS). The MurNAc-LAA domain maps to 59–273 (VMLDPGHGGI…IATAIANGII (215 aa)).

This sequence belongs to the N-acetylmuramoyl-L-alanine amidase 3 family. In terms of processing, predicted to be exported by the Tat system. The position of the signal peptide cleavage has not been experimentally proven.

It localises to the periplasm. It carries out the reaction Hydrolyzes the link between N-acetylmuramoyl residues and L-amino acid residues in certain cell-wall glycopeptides.. Its function is as follows. Cell-wall hydrolase involved in septum cleavage during cell division. This Salmonella typhimurium (strain LT2 / SGSC1412 / ATCC 700720) protein is N-acetylmuramoyl-L-alanine amidase AmiA (amiA).